A 512-amino-acid chain; its full sequence is Cytochrome P450 26B1 (512 aa).

C441 provides a ligand contact to heme.

The protein belongs to the cytochrome P450 family. Heme is required as a cofactor.

Its subcellular location is the endoplasmic reticulum membrane. The protein resides in the microsome membrane. It catalyses the reaction all-trans-retinoate + reduced [NADPH--hemoprotein reductase] + O2 = all-trans-4-hydroxyretinoate + oxidized [NADPH--hemoprotein reductase] + H2O + H(+). It carries out the reaction all-trans-retinoate + reduced [NADPH--hemoprotein reductase] + O2 = all-trans-18-hydroxyretinoate + oxidized [NADPH--hemoprotein reductase] + H2O + H(+). Functionally, a cytochrome P450 monooxygenase involved in the metabolism of retinoates (RAs), the active metabolites of vitamin A, and critical signaling molecules in animals. RAs exist as at least four different isomers: all-trans-RA (atRA), 9-cis-RA, 13-cis-RA, and 9,13-dicis-RA, where atRA is considered to be the biologically active isomer, although 9-cis-RA and 13-cis-RA also have activity. Catalyzes the hydroxylation of atRA primarily at C-4 and C-18, thereby contributing to the regulation of atRA homeostasis and signaling. Hydroxylation of atRA limits its biological activity and initiates a degradative process leading to its eventual elimination. Involved in the convertion of atRA to all-trans-4-oxo-RA. Can oxidize all-trans-13,14-dihydroretinoate (DRA) to metabolites which could include all-trans-4-oxo-DRA, all-trans-4-hydroxy-DRA, all-trans-5,8-epoxy-DRA, and all-trans-18-hydroxy-DRA. Shows preference for the following substrates: atRA &gt; 9-cis-RA &gt; 13-cis-RA. Plays a central role in germ cell development: acts by degrading RAs in the developing testis, preventing STRA8 expression, thereby leading to delay of meiosis. Required for the maintenance of the undifferentiated state of male germ cells during embryonic development in Sertoli cells, inducing arrest in G0 phase of the cell cycle and preventing meiotic entry. Plays a role in skeletal development, both at the level of patterning and in the ossification of bone and the establishment of some synovial joints. Essential for postnatal survival. Also has a significant activity in oxidation of tazarotenic acid and may therefore metabolize that xenobiotic in vivo. This is Cytochrome P450 26B1 (Cyp26b1) from Mus musculus (Mouse).